The primary structure comprises 264 residues: Undecaprenyl-diphosphatase (264 aa).

A run of 7 helical transmembrane segments spans residues 42–62 (ESLL…LVVF), 82–102 (TQFS…GLLF), 109–129 (LFGG…LLLW), 146–166 (AFII…RSGA), 184–204 (FSFL…LMSG), 215–235 (ILAT…TWMI), and 243–263 (LSWF…FAYA).

The protein belongs to the UppP family.

Its subcellular location is the cell membrane. The catalysed reaction is di-trans,octa-cis-undecaprenyl diphosphate + H2O = di-trans,octa-cis-undecaprenyl phosphate + phosphate + H(+). In terms of biological role, catalyzes the dephosphorylation of undecaprenyl diphosphate (UPP). Confers resistance to bacitracin. The polypeptide is Undecaprenyl-diphosphatase (Christiangramia forsetii (strain DSM 17595 / CGMCC 1.15422 / KT0803) (Gramella forsetii)).